The sequence spans 360 residues: DNA polymerase IV (360 aa).

Positions 9 to 191 constitute a UmuC domain; that stretch reads IMHLDIDAFY…LNINKIPYIG (183 aa). 2 residues coordinate Mg(2+): Asp13 and Asp108. Glu109 is a catalytic residue.

Belongs to the DNA polymerase type-Y family. Monomer. Mg(2+) is required as a cofactor.

It is found in the cytoplasm. The catalysed reaction is DNA(n) + a 2'-deoxyribonucleoside 5'-triphosphate = DNA(n+1) + diphosphate. Functionally, poorly processive, error-prone DNA polymerase involved in untargeted mutagenesis. Copies undamaged DNA at stalled replication forks, which arise in vivo from mismatched or misaligned primer ends. These misaligned primers can be extended by PolIV. Exhibits no 3'-5' exonuclease (proofreading) activity. May be involved in translesional synthesis, in conjunction with the beta clamp from PolIII. The sequence is that of DNA polymerase IV from Ureaplasma parvum serovar 3 (strain ATCC 27815 / 27 / NCTC 11736).